A 225-amino-acid chain; its full sequence is Potassium-transporting ATPase KdpC subunit (225 aa).

A helical membrane pass occupies residues 18 to 38 (ALLVLTVVTGIVYPLVVTGVA). The segment at 134-161 (NSVPGHPVRPEDVPADAVTSSGSGLDPD) is disordered.

Belongs to the KdpC family. In terms of assembly, the system is composed of three essential subunits: KdpA, KdpB and KdpC.

The protein localises to the cell membrane. Part of the high-affinity ATP-driven potassium transport (or Kdp) system, which catalyzes the hydrolysis of ATP coupled with the electrogenic transport of potassium into the cytoplasm. This subunit acts as a catalytic chaperone that increases the ATP-binding affinity of the ATP-hydrolyzing subunit KdpB by the formation of a transient KdpB/KdpC/ATP ternary complex. The chain is Potassium-transporting ATPase KdpC subunit from Streptomyces coelicolor (strain ATCC BAA-471 / A3(2) / M145).